A 110-amino-acid polypeptide reads, in one-letter code: Cell cycle protein GpsB (110 aa).

A coiled-coil region spans residues 37–63; the sequence is KDYTVYIALVKELQEENAKLKAKATSA. The interval 59-79 is disordered; the sequence is KATSAPASRPAYASATSEPSH. Residues 60-75 show a composition bias toward low complexity; sequence ATSAPASRPAYASATS.

This sequence belongs to the GpsB family. As to quaternary structure, forms polymers through the coiled coil domains. Interacts with PBP1, MreC and EzrA.

It localises to the cytoplasm. Divisome component that associates with the complex late in its assembly, after the Z-ring is formed, and is dependent on DivIC and PBP2B for its recruitment to the divisome. Together with EzrA, is a key component of the system that regulates PBP1 localization during cell cycle progression. Its main role could be the removal of PBP1 from the cell pole after pole maturation is completed. Also contributes to the recruitment of PBP1 to the division complex. Not essential for septum formation. This is Cell cycle protein GpsB from Streptococcus thermophilus (strain CNRZ 1066).